The sequence spans 747 residues: Pseudouridine-metabolizing bifunctional protein C1861.05 (747 aa).

Residues 1–379 (MLIVMNRGCR…KVSDKGVSSS (379 aa)) are pseudouridine-5'-phosphate glycosidase. The active-site Proton donor; for PsiMP glycosidase activity is the glutamate 61. Substrate-binding residues include lysine 123 and valine 143. Aspartate 175 provides a ligand contact to Mn(2+). 177-179 (SAD) is a binding site for substrate. The active-site Nucleophile; for PsiMP glycosidase activity is lysine 196. The tract at residues 380 to 747 (KKKITETTSK…VNPEIKTLLK (368 aa)) is pseudouridine kinase.

It in the N-terminal section; belongs to the pseudouridine-5'-phosphate glycosidase family. In the C-terminal section; belongs to the carbohydrate kinase PfkB family. It depends on Mn(2+) as a cofactor.

It localises to the cytoplasm. It catalyses the reaction D-ribose 5-phosphate + uracil = psi-UMP + H2O. The catalysed reaction is pseudouridine + ATP = psi-UMP + ADP + H(+). Its function is as follows. Bifunctional enzyme that catalyzes the phosphorylation of pseudouridine to pseudouridine 5'-phosphate (PsiMP), and the reversible cleavage of pseudouridine 5'-phosphate to ribose 5-phosphate and uracil. Is involved in a pseudouridine degradation pathway. The chain is Pseudouridine-metabolizing bifunctional protein C1861.05 from Schizosaccharomyces pombe (strain 972 / ATCC 24843) (Fission yeast).